A 678-amino-acid polypeptide reads, in one-letter code: ABC transporter G family member 13 (678 aa).

An ABC transporter domain is found at 10–254 (VAWEDLTVVI…FGEAGFPCPS (245 aa)). An ATP-binding site is contributed by 48-55 (GPSGSGKS). One can recognise an ABC transmembrane type-2 domain in the interval 355 to 567 (KQLRILTQRS…ALQGAYKNEM (213 aa)). Transmembrane regions (helical) follow at residues 374 to 394 (YYWM…SIFF), 409 to 429 (CGGF…QSFI), 446 to 466 (VAVY…LMCL), 490 to 510 (LDLI…ASVV), 513 to 533 (FLMG…SAGF), and 602 to 622 (LDLA…FAIL). Position 658 is a phosphoserine (serine 658).

It belongs to the ABC transporter superfamily. ABCG family. Eye pigment precursor importer (TC 3.A.1.204) subfamily.

It localises to the membrane. The sequence is that of ABC transporter G family member 13 (ABCG13) from Arabidopsis thaliana (Mouse-ear cress).